Reading from the N-terminus, the 224-residue chain is MADS-box transcription factor 16 (224 aa).

One can recognise an MADS-box domain in the interval 1-61; it reads MGRGKIEIKR…GKYHEFCSPS (61 aa). The K-box domain maps to 84–174; the sequence is YENMQRTLSH…QQELGLREEP (91 aa).

In terms of assembly, may interact with the K-box of MADS4, MADS6 and MADS8. May form a heterodimer with MADS4. Expressed in lodicules, stamens and carpels.

The protein resides in the nucleus. Probable transcription factor involved in the development of floral organs. Required for normal development of lodicules and stamens (whorls 2 and 3). May function as a heterodimer with MADS4. The chain is MADS-box transcription factor 16 (MADS16) from Oryza sativa subsp. japonica (Rice).